The chain runs to 280 residues: uncharacterized protein (280 aa).

Helical transmembrane passes span 10-29, 164-186, and 209-228; these read IQQN…LLFN, FVFV…FAFI, and IFGL…YFLL.

It is found in the cell membrane. This is an uncharacterized protein from Bacillus subtilis (strain 168).